Reading from the N-terminus, the 405-residue chain is Cysteine desulfurase IscS (405 aa).

Residues alanine 75–threonine 76, asparagine 156, glutamine 184, and serine 204–histidine 206 each bind pyridoxal 5'-phosphate. Lysine 207 carries the N6-(pyridoxal phosphate)lysine modification. Threonine 244 contacts pyridoxal 5'-phosphate. Cysteine 329 (cysteine persulfide intermediate) is an active-site residue. Position 329 (cysteine 329) interacts with [2Fe-2S] cluster.

This sequence belongs to the class-V pyridoxal-phosphate-dependent aminotransferase family. NifS/IscS subfamily. Homodimer. Forms a heterotetramer with IscU, interacts with other sulfur acceptors. Requires pyridoxal 5'-phosphate as cofactor.

It is found in the cytoplasm. It catalyses the reaction (sulfur carrier)-H + L-cysteine = (sulfur carrier)-SH + L-alanine. Its pathway is cofactor biosynthesis; iron-sulfur cluster biosynthesis. Functionally, master enzyme that delivers sulfur to a number of partners involved in Fe-S cluster assembly, tRNA modification or cofactor biosynthesis. Catalyzes the removal of elemental sulfur atoms from cysteine to produce alanine. Functions as a sulfur delivery protein for Fe-S cluster synthesis onto IscU, an Fe-S scaffold assembly protein, as well as other S acceptor proteins. This is Cysteine desulfurase IscS from Methylobacillus flagellatus (strain ATCC 51484 / DSM 6875 / VKM B-1610 / KT).